The primary structure comprises 112 residues: UPF0342 protein STH1710 (112 aa).

The protein belongs to the UPF0342 family.

This chain is UPF0342 protein STH1710, found in Symbiobacterium thermophilum (strain DSM 24528 / JCM 14929 / IAM 14863 / T).